The chain runs to 999 residues: Sarcoplasmic/endoplasmic reticulum calcium ATPase 3 (999 aa).

Met1 carries the post-translational modification N-acetylmethionine. Over 1 to 48 (MEEAHLLSAADVLRRFSVTAEGGLSLEQVTDARERYGPNELPTEEGKS) the chain is Cytoplasmic. The residue at position 17 (Ser17) is a Phosphoserine. Thr19 carries the post-translational modification Phosphothreonine. Ser25 bears the Phosphoserine mark. Residues 49 to 69 (LWELVVEQFEDLLVRILLLAA) form a helical membrane-spanning segment. The Lumenal portion of the chain corresponds to 70–89 (LVSFVLAWFEEGEETTTAFV). The helical transmembrane segment at 90–110 (EPLVIMLILVANAIVGVWQER) threads the bilayer. Over 111 to 253 (NAESAIEALK…PERTPLQRKL (143 aa)) the chain is Cytoplasmic. Residues 254–273 (DEFGRQLSHAISVICVAVWV) traverse the membrane as a helical segment. The Lumenal segment spans residues 274-295 (INIGHFADPAHGGSWLRGAVYY). A helical membrane pass occupies residues 296 to 313 (FKIAVALAVAAIPEGLPA). Ca(2+)-binding residues include Val304, Ala305, Ile307, and Glu309. Topologically, residues 314-757 (VITTCLALGT…EEGRAIYNNM (444 aa)) are cytoplasmic. The active-site 4-aspartylphosphate intermediate is Asp351. Mg(2+) contacts are provided by Asp351 and Thr353. ATP is bound at residue Thr353. The tract at residues 370-400 (AEAEAGTCRLHEFTISGTTYTPEGEVRQGEQ) is interaction with phospholamban 1. Thr415 carries the phosphothreonine modification. Glu442, Arg489, Lys515, Arg560, Thr625, Gly626, and Asp627 together coordinate ATP. A Phosphoserine modification is found at Ser662. The ATP site is built by Arg678 and Lys684. Asp703 lines the Mg(2+) pocket. Asn706 contributes to the ATP binding site. Residues 758 to 777 (KQFIRYLISSNVGEVVCIFL) traverse the membrane as a helical segment. Positions 768 and 771 each coordinate Ca(2+). The Lumenal portion of the chain corresponds to 778–787 (TAILGLPEAL). The chain crosses the membrane as a helical span at residues 788–808 (IPVQLLWVNLVTDGLPATALG). The interaction with phospholamban 2 stretch occupies residues 788–808 (IPVQLLWVNLVTDGLPATALG). Ca(2+) contacts are provided by Asn796, Thr799, and Asp800. Residues 809-828 (FNPPDLDIMEKPPRNPREAL) are Cytoplasmic-facing. A helical transmembrane segment spans residues 829–851 (ISGWLFFRYLAIGVYVGLATVAA). At 852–897 (ATWWFLYDTEGPQVTFYQLRNFLKCSEDNPLFAGIDCKVFESRFPT) the chain is on the lumenal side. The chain crosses the membrane as a helical span at residues 898–917 (TMALSVLVTIEMCNALNSVS). Glu908 serves as a coordination point for Ca(2+). The Cytoplasmic segment spans residues 918-930 (ENQSLLRMPPWLN). Residues 931-949 (PWLLGAVVMSMALHFLILL) form a helical membrane-spanning segment. Over 950 to 964 (VPPLPLIFQVTPLSG) the chain is Lumenal. Residues 965–985 (RQWGVVLQMSLPVILLDEALK) traverse the membrane as a helical segment. Over 986-999 (YLSRNHMDEKKDLK) the chain is Cytoplasmic.

Belongs to the cation transport ATPase (P-type) (TC 3.A.3) family. Type IIA subfamily. As to quaternary structure, interacts with sarcolipin (SLN). Interacts with phospholamban (PLN). Interacts with myoregulin (MRLN). Interacts with DWORF. Interacts with VMP1. Interacts with TUNAR; the interaction occurs at low levels in low glucose conditions and is increased by high glucose levels. Mg(2+) serves as cofactor.

The protein localises to the endoplasmic reticulum membrane. The protein resides in the sarcoplasmic reticulum membrane. It catalyses the reaction Ca(2+)(in) + ATP + H2O = Ca(2+)(out) + ADP + phosphate + H(+). Its activity is regulated as follows. Inhibited by sarcolipin (SLN), phospholamban (PLN) and myoregulin (MRLN). Enhanced by DWORF; DWORF increases activity by displacing sarcolipin (SLN), phospholamban (PLN) and myoregulin (MRLN). Functionally, this magnesium-dependent enzyme catalyzes the hydrolysis of ATP coupled with the transport of calcium. Transports calcium ions from the cytosol into the sarcoplasmic/endoplasmic reticulum lumen. Contributes to calcium sequestration involved in muscular excitation/contraction. In Mus musculus (Mouse), this protein is Sarcoplasmic/endoplasmic reticulum calcium ATPase 3 (Atp2a3).